The chain runs to 193 residues: Non-canonical purine NTP pyrophosphatase homolog (193 aa).

Belongs to the HAM1 NTPase family.

The polypeptide is Non-canonical purine NTP pyrophosphatase homolog (Halalkalibacterium halodurans (strain ATCC BAA-125 / DSM 18197 / FERM 7344 / JCM 9153 / C-125) (Bacillus halodurans)).